The sequence spans 847 residues: Putative disease resistance RPP13-like protein 2 (847 aa).

The stretch at 26-42 (GVKDDLEELKTELTCIQ) forms a coiled coil. An NB-ARC domain is found at 142-446 (STSRVREVRR…AEGFIQEDEE (305 aa)). 191-198 (GMEGLGKT) contributes to the ATP binding site. LRR repeat units follow at residues 587–610 (LVHLRYLGIADTVVNNLPDFISNL), 612–634 (FLQTLDASGNSFERMTDLSNLTS), 703–726 (LKNLRVLKIEVVSFSLFSEETVRF), 749–774 (FPSLESLTLVTNLQEDPMPTLQKLQR), and 807–830 (IKRLDELEIEEEAMPCLMKLNLDN).

This sequence belongs to the disease resistance NB-LRR family. RPP13 subfamily.

In terms of biological role, potential disease resistance protein. The polypeptide is Putative disease resistance RPP13-like protein 2 (RPP13L2) (Arabidopsis thaliana (Mouse-ear cress)).